A 309-amino-acid chain; its full sequence is Small ribosomal subunit biogenesis GTPase RsgA (309 aa).

One can recognise a CP-type G domain in the interval 64–225 (ENELVRPPLA…VADTPGFSTY (162 aa)). GTP contacts are provided by residues 113 to 116 (SKTD) and 168 to 176 (GQTGAGKST). The Zn(2+) site is built by Cys249, Cys254, His256, and Cys262.

This sequence belongs to the TRAFAC class YlqF/YawG GTPase family. RsgA subfamily. Monomer. Associates with 30S ribosomal subunit, binds 16S rRNA. Zn(2+) is required as a cofactor.

It localises to the cytoplasm. Functionally, one of several proteins that assist in the late maturation steps of the functional core of the 30S ribosomal subunit. Helps release RbfA from mature subunits. May play a role in the assembly of ribosomal proteins into the subunit. Circularly permuted GTPase that catalyzes slow GTP hydrolysis, GTPase activity is stimulated by the 30S ribosomal subunit. The protein is Small ribosomal subunit biogenesis GTPase RsgA of Pediococcus pentosaceus (strain ATCC 25745 / CCUG 21536 / LMG 10740 / 183-1w).